Consider the following 88-residue polypeptide: Small ribosomal subunit protein uS15 (88 aa).

This sequence belongs to the universal ribosomal protein uS15 family. In terms of assembly, part of the 30S ribosomal subunit. Forms a bridge to the 50S subunit in the 70S ribosome, contacting the 23S rRNA.

Functionally, one of the primary rRNA binding proteins, it binds directly to 16S rRNA where it helps nucleate assembly of the platform of the 30S subunit by binding and bridging several RNA helices of the 16S rRNA. Forms an intersubunit bridge (bridge B4) with the 23S rRNA of the 50S subunit in the ribosome. This Albidiferax ferrireducens (strain ATCC BAA-621 / DSM 15236 / T118) (Rhodoferax ferrireducens) protein is Small ribosomal subunit protein uS15.